Consider the following 76-residue polypeptide: Conotoxin Gla(1)-TxVI (76 aa).

Positions 1–19 (MEKLTILLLVAAVLMSTQA) are cleaved as a signal peptide. Residues 20-45 (LVERAGENHSKENINFLLKRKRAADR) constitute a propeptide that is removed on maturation. The residue at position 48 (Trp48) is a 6'-bromotryptophan. Residue Glu50 is modified to 4-carboxyglutamate. 3 disulfide bridges follow: Cys51–Cys65, Cys58–Cys69, and Cys64–Cys73. Pro61 carries the post-translational modification 4-hydroxyproline. A 4-carboxyglutamate mark is found at Glu63, Glu67, and Glu70. Trp76 carries the post-translational modification 6'-bromotryptophan.

Expressed by the venom duct.

It is found in the secreted. The sequence is that of Conotoxin Gla(1)-TxVI from Conus textile (Cloth-of-gold cone).